A 147-amino-acid polypeptide reads, in one-letter code: Small ribosomal subunit protein uS12 (147 aa).

Belongs to the universal ribosomal protein uS12 family. As to quaternary structure, part of the 30S ribosomal subunit.

Its function is as follows. With S4 and S5 plays an important role in translational accuracy. Located at the interface of the 30S and 50S subunits. This is Small ribosomal subunit protein uS12 from Pyrobaculum calidifontis (strain DSM 21063 / JCM 11548 / VA1).